Reading from the N-terminus, the 243-residue chain is Zinc import ATP-binding protein ZnuC 2 (243 aa).

Residues 3–218 form the ABC transporter domain; sequence LSLHQLSVKF…PEYKVLFGLD (216 aa). Position 35–42 (35–42) interacts with ATP; sequence GPNGSGKS.

Belongs to the ABC transporter superfamily. Zinc importer (TC 3.A.1.15.5) family. In terms of assembly, the complex is composed of two ATP-binding proteins (ZnuC), two transmembrane proteins (ZnuB) and a solute-binding protein (ZnuA).

Its subcellular location is the cell inner membrane. The enzyme catalyses Zn(2+)(out) + ATP(in) + H2O(in) = Zn(2+)(in) + ADP(in) + phosphate(in) + H(+)(in). In terms of biological role, part of the ABC transporter complex ZnuABC involved in zinc import. Responsible for energy coupling to the transport system. In Aliivibrio fischeri (strain ATCC 700601 / ES114) (Vibrio fischeri), this protein is Zinc import ATP-binding protein ZnuC 2.